The following is a 2753-amino-acid chain: Maltase-glucoamylase (2753 aa).

At 1–13 (MARKKLKKFTTLE) the chain is on the cytoplasmic side. Residues 14–34 (IVLSVLLLVLFIISIVLIVLL) form a helical; Signal-anchor for type II membrane protein membrane-spanning segment. At 35–2753 (AKESLKSTAP…FTSLTWISTL (2719 aa)) the chain is on the lumenal side. Positions 41–87 (STAPDPGTTGTPDPGTTGTPDPGTTGTTHARTTGPPDPGTTGTTPVS) are disordered. Residues 44–85 (PDPGTTGTPDPGTTGTPDPGTTGTTHARTTGPPDPGTTGTTP) show a composition bias toward low complexity. Residues 88–134 (AECPVVNELERINCIPDQPPTKATCDQRGCCWNPQGAVSVPWCYYSK) enclose the P-type 1 domain. Disulfide bonds link C90-C118, C101-C117, and C112-C130. A glycan (N-linked (GlcNAc...) asparagine) is linked at N135. D289 is a binding site for acarbose. N295 carries N-linked (GlcNAc...) asparagine glycosylation. Residues 356-737 (PEQVVQEYLE…FRAHSRGDTV (382 aa)) are maltase. D413 is an acarbose binding site. Sulfotyrosine occurs at positions 416 and 425. N-linked (GlcNAc...) asparagine glycans are attached at residues N457, N458, and N479. D529 acts as the Nucleophile in catalysis. E532 is an active-site residue. Acarbose is bound by residues R612 and D628. Residues C659 and C670 are joined by a disulfide bond. An acarbose-binding site is contributed by H686. N707, N749, N827, N885, N912, N977, N989, and N1255 each carry an N-linked (GlcNAc...) asparagine glycan. Positions 954–1000 (WSIKIRDEEKIDCYPDENGASAENCTARGCIWEASNSSGVPFCYFVN) constitute a P-type 2 domain. 2 cysteine pairs are disulfide-bonded: C966-C983 and C978-C996. The interval 1221–1632 (TPELVTQQYT…MQKAHTEGVT (412 aa)) is glucoamylase. Y1282 is modified (sulfotyrosine). N-linked (GlcNAc...) asparagine glycans are attached at residues N1323, N1364, and N1388. D1420 (nucleophile) is an active-site residue. The active site involves E1423. D1526 serves as the catalytic Proton donor. One can recognise a P-type 3 domain in the interval 1850 to 1896 (WSIKIRDEEKIDCYPDENGDSAENCTARGCIWEASNSSGVPFCYFVN). 2 disulfide bridges follow: C1862-C1879 and C1874-C1892. N-linked (GlcNAc...) asparagine glycans are attached at residues N2499, N2568, N2738, and N2743.

Belongs to the glycosyl hydrolase 31 family. In terms of assembly, monomer. N- and O-glycosylated. In terms of processing, does not undergo intracellular or extracellular proteolytic cleavage. Post-translationally, sulfated. In terms of tissue distribution, broadly expressed. Highly expressed in small intestine. Expressed in granulocytes.

The protein resides in the apical cell membrane. It carries out the reaction Hydrolysis of terminal, non-reducing (1-&gt;4)-linked alpha-D-glucose residues with release of alpha-D-glucose.. The catalysed reaction is D-maltoheptaose + H2O = D-maltohexaose + alpha-D-glucose. It catalyses the reaction D-maltohexaose + H2O = D-maltopentaose + alpha-D-glucose. The enzyme catalyses D-maltopentaose + H2O = D-maltotetraose + alpha-D-glucose. It carries out the reaction D-maltotetraose + H2O = D-maltotriose + alpha-D-glucose. The catalysed reaction is D-maltotriose + H2O = D-maltose + alpha-D-glucose. It catalyses the reaction D-maltose + H2O = alpha-D-glucose + D-glucose. The enzyme catalyses nigerose + H2O = alpha-D-glucose + D-glucose. It carries out the reaction kojibiose + H2O = alpha-D-glucose + D-glucose. The catalysed reaction is isomaltose + H2O = alpha-D-glucose + D-glucose. It catalyses the reaction 6-O-alpha-D-glucopyranosyl-D-fructose + H2O = alpha-D-glucose + D-fructose. The protein operates within carbohydrate degradation. Its activity is regulated as follows. Down-regulated at high oligomaltose concentration as it occurs during the mealtime. Down-regulated by anti-diabetic drug acarbose. Its function is as follows. Alpha-(1,4) exo-glucosidase involved in breakdown of dietary starch oligosaccharides in small intestine. Cleaves the non-reducing alpha-(1,4)-linked glucose residue in linear dextrins with retention of anomeric center stereochemistry. Mainly hydrolyzes short length oligomaltoses having two to seven glucose residues. Can cleave alpha-(1,2), alpha-(1,3) and alpha-(1,6) glycosidic linkages with lower efficiency, whereas beta glycosidic linkages are usually not hydrolyzed. The chain is Maltase-glucoamylase from Homo sapiens (Human).